Here is a 396-residue protein sequence, read N- to C-terminus: Metacaspase-1 (396 aa).

The segment covering Met-1–Gln-20 has biased composition (gly residues). The tract at residues Met-1–Gly-86 is disordered. Over residues His-47–Gln-62 the composition is skewed to low complexity. A compositionally biased stretch (polar residues) spans Gln-72–Gln-81. Residues His-186 and Cys-242 contribute to the active site.

It belongs to the peptidase C14B family.

In terms of biological role, involved in cell death (apoptosis). The polypeptide is Metacaspase-1 (MCA1) (Pyricularia oryzae (strain 70-15 / ATCC MYA-4617 / FGSC 8958) (Rice blast fungus)).